The primary structure comprises 237 residues: Ribosomal RNA small subunit methyltransferase G (237 aa).

S-adenosyl-L-methionine contacts are provided by residues Gly-78, Phe-83, 129–130, and Arg-148; that span reads AE.

Belongs to the methyltransferase superfamily. RNA methyltransferase RsmG family.

Its subcellular location is the cytoplasm. In terms of biological role, specifically methylates the N7 position of a guanine in 16S rRNA. The sequence is that of Ribosomal RNA small subunit methyltransferase G from Streptococcus pyogenes serotype M1.